The sequence spans 511 residues: Glycoprotein (511 aa).

The signal sequence occupies residues 1–16 (MKCLLYLAFLFIGVNC). Residues 17-467 (KFTIVFPHNQ…FSSWKSSIAS (451 aa)) are Virion surface-facing. The segment at 18–35 (FTIVFPHNQKGNWKNVPS) is trimerization. Cystine bridges form between cysteine 40-cysteine 300, cysteine 75-cysteine 108, cysteine 84-cysteine 130, cysteine 169-cysteine 174, cysteine 193-cysteine 240, and cysteine 235-cysteine 269. Residues 53–172 (IGTALQVKMP…QFINGKCSND (120 aa)) are fusion peptide. The N-linked (GlcNAc...) asparagine; by host glycan is linked to asparagine 179. The tract at residues 259-309 (DLFAAARFPECPEGSSISAPSQTSVDVSLIQDVERILDYSLCQETWSKIRA) is trimerization. Residue asparagine 336 is glycosylated (N-linked (GlcNAc...) asparagine; by host). The segment at 383-405 (EIGPNGVLRTSLGYKFPLYMIGH) is trimerization. A helical membrane pass occupies residues 468–488 (FFFIIGLIIGLFLVLRVGIYL). Cysteine 489 carries the S-palmitoyl cysteine; by host lipid modification. At 489 to 511 (CIKLKHTKKRQIYTDIEMNRLGK) the chain is on the intravirion side. The short motif at 496–506 (KKRQIYTDIEM) is the basolateral targeting ex vivo element.

It belongs to the vesiculovirus glycoprotein family. As to quaternary structure, homotrimer. Interacts with host LDL at target cell surface. Post-translationally, glycosylated by host. Palmitoylated by host.

It is found in the virion membrane. Its subcellular location is the host membrane. Attaches the virus to host LDL receptors, inducing clathrin-dependent endocytosis of the virion. In the endosome, the acidic pH induces conformational changes in the glycoprotein trimer, which trigger fusion between virus and endosomal membrane. The protein is Glycoprotein (G) of Vesicular stomatitis Indiana virus (strain Orsay) (VSIV).